Here is an 81-residue protein sequence, read N- to C-terminus: MKLTCVMIVAVLFLTAWTFVTADDSRNGLENLSPKARHEMKNPEASKSNKRYECYSTGTFCGVNGGLCCSNLCLFFVCLFS.

An N-terminal signal peptide occupies residues 1-22; the sequence is MKLTCVMIVAVLFLTAWTFVTA. Positions 23 to 51 are excised as a propeptide; the sequence is DDSRNGLENLSPKARHEMKNPEASKSNKR. 3 disulfide bridges follow: Cys54–Cys69, Cys61–Cys73, and Cys68–Cys78.

This sequence belongs to the conotoxin O1 superfamily. Expressed by the venom duct.

It localises to the secreted. Its function is as follows. Delta-conotoxins bind to site 6 of voltage-gated sodium channels (Nav) and inhibit the inactivation process. This chain is Delta-conotoxin-like Ac6.3, found in Conus achatinus (Little frog cone).